Reading from the N-terminus, the 387-residue chain is NADPH-dependent aldehyde reductase YqhD (387 aa).

NADP(+)-binding residues include Gly38, Ser40, Asn68, Gly95, Ser96, Asp99, Thr138, Asn147, Gly149, Lys160, Tyr179, and Thr182. 4 residues coordinate Zn(2+): Asp194, His198, His267, and His281.

This sequence belongs to the iron-containing alcohol dehydrogenase family. As to quaternary structure, homodimer. The crystals contain two dimers in the asymmetric unit. Requires Zn(2+) as cofactor.

The catalysed reaction is a primary alcohol + NADP(+) = an aldehyde + NADPH + H(+). The enzyme catalyses butan-1-ol + NADP(+) = butanal + NADPH + H(+). It carries out the reaction 1-propanol + NADP(+) = propanal + NADPH + H(+). It catalyses the reaction allyl alcohol + NADP(+) = acrolein + NADPH + H(+). Functionally, exhibits NADPH-dependent reductase activity for a broad range of short-chain aldehydes. Shows highest catalytic efficiency toward butanal, propanal and the highly toxic aldehydes acrolein and malondialdehyde (MDA), which are produced mainly during lipid peroxidation. Mediates resistance to reactive oxygen species (ROS) elicitors, such as paraquat and potassium tellurite, probably by protecting the cell against the toxic effects of reactive aldehydes derived from membrane lipid peroxidation. Also acts, with lower efficiency, on acetaldehyde, glyceraldehyde, glycolaldehyde, methylglyoxal, glyoxal and hydroxyacetone. Could be involved in glyoxal metabolism, by catalyzing the reduction of glyoxal to glycolaldehyde, and further to 1,2-ethandiol. Catalyzes the reduction of isobutyraldehyde (2-methylpropanal) to isobutanol, and probably contributes to the production of isobutanol. Can probably catalyze the reduction of glutaraldehyde, a widely used biocide, to 1,5-pentanediol, which is non-toxic. Overexpression of YqhD protects the cells against glutaraldehyde toxicity. Can catalyze in vitro the NADPH-dependent reduction of furfural, a natural product of lignocellulosic decomposition, to the less toxic product, furfuryl alcohol. However, it is unlikely that furfural is a physiological substrate. Its function is as follows. In contrast, Sulzenbacher et al. detected significant activities only in the presence of alcohol and NADP(+). They reported in vitro NADP(+)-dependent alcohol dehydrogenase (ADH) activity towards various alcohols, with a preference for alcohols longer than C(3), but the affinity for the substrates is poor, suggesting that these compounds are not the physiological substrates. Perez et al. did not detect dehydrogenase activity with short and medium chain alcohols such as methanol, ethanol, propanol, butanol or isopropanol. This Escherichia coli (strain K12) protein is NADPH-dependent aldehyde reductase YqhD (yqhD).